Reading from the N-terminus, the 327-residue chain is GTP 3',8-cyclase (327 aa).

Residues 7-232 (HHDRQFRYLR…IKRDRTAGPA (226 aa)) form the Radical SAM core domain. R16 contributes to the GTP binding site. Residues C23 and C27 each coordinate [4Fe-4S] cluster. Y29 is a binding site for S-adenosyl-L-methionine. C30 provides a ligand contact to [4Fe-4S] cluster. R66 contacts GTP. Position 70 (G70) interacts with S-adenosyl-L-methionine. T97 is a GTP binding site. S121 contributes to the S-adenosyl-L-methionine binding site. A GTP-binding site is contributed by K158. M192 serves as a coordination point for S-adenosyl-L-methionine. [4Fe-4S] cluster contacts are provided by C255 and C258. Residue 260-262 (RLR) coordinates GTP. C272 lines the [4Fe-4S] cluster pocket.

Belongs to the radical SAM superfamily. MoaA family. As to quaternary structure, monomer and homodimer. It depends on [4Fe-4S] cluster as a cofactor.

It carries out the reaction GTP + AH2 + S-adenosyl-L-methionine = (8S)-3',8-cyclo-7,8-dihydroguanosine 5'-triphosphate + 5'-deoxyadenosine + L-methionine + A + H(+). The protein operates within cofactor biosynthesis; molybdopterin biosynthesis. Catalyzes the cyclization of GTP to (8S)-3',8-cyclo-7,8-dihydroguanosine 5'-triphosphate. This chain is GTP 3',8-cyclase, found in Synechococcus elongatus (strain ATCC 33912 / PCC 7942 / FACHB-805) (Anacystis nidulans R2).